Consider the following 227-residue polypeptide: Flagellar transcriptional regulator FtcR (227 aa).

Residues 1-116 (MIVVVDDRDM…EILARINAIR (116 aa)) form the Response regulatory domain. A DNA-binding region (ompR/PhoB-type) is located at residues 127-226 (ADGTQLGPIR…KRFLGYCINI (100 aa)).

Required for transcription of flagellar genes. The chain is Flagellar transcriptional regulator FtcR (ftcR) from Brucella abortus (strain 2308).